Consider the following 89-residue polypeptide: Signal recognition particle 19 kDa protein (89 aa).

Belongs to the SRP19 family. Part of the signal recognition particle protein translocation system, which is composed of SRP and FtsY. Archaeal SRP consists of a 7S RNA molecule of 300 nucleotides and two protein subunits: SRP54 and SRP19.

Its subcellular location is the cytoplasm. In terms of biological role, involved in targeting and insertion of nascent membrane proteins into the cytoplasmic membrane. Binds directly to 7S RNA and mediates binding of the 54 kDa subunit of the SRP. The polypeptide is Signal recognition particle 19 kDa protein (Methanobrevibacter smithii (strain ATCC 35061 / DSM 861 / OCM 144 / PS)).